Here is a 445-residue protein sequence, read N- to C-terminus: Phosphoglucosamine mutase (445 aa).

Catalysis depends on S102, which acts as the Phosphoserine intermediate. Mg(2+) is bound by residues S102, D240, D242, and D244. A Phosphoserine modification is found at S102.

The protein belongs to the phosphohexose mutase family. It depends on Mg(2+) as a cofactor. Activated by phosphorylation.

The enzyme catalyses alpha-D-glucosamine 1-phosphate = D-glucosamine 6-phosphate. Functionally, catalyzes the conversion of glucosamine-6-phosphate to glucosamine-1-phosphate. The polypeptide is Phosphoglucosamine mutase (Mycolicibacterium gilvum (strain PYR-GCK) (Mycobacterium gilvum (strain PYR-GCK))).